Reading from the N-terminus, the 146-residue chain is Leptin (146 aa).

A disulfide bridge links Cys-96 with Cys-146.

It belongs to the leptin family.

Its subcellular location is the secreted. Key player in the regulation of energy balance and body weight control. Once released into the circulation, has central and peripheral effects by binding LEPR, found in many tissues, which results in the activation of several major signaling pathways. In the hypothalamus, acts as an appetite-regulating factor that induces a decrease in food intake and an increase in energy consumption by inducing anorexinogenic factors and suppressing orexigenic neuropeptides, also regulates bone mass and secretion of hypothalamo-pituitary-adrenal hormones. In the periphery, increases basal metabolism, influences reproductive function, regulates pancreatic beta-cell function and insulin secretion, is pro-angiogenic for endothelial cell and affects innate and adaptive immunity. In the arcuate nucleus of the hypothalamus, activates by depolarization POMC neurons inducing FOS and SOCS3 expression to release anorexigenic peptides and inhibits by hyperpolarization NPY neurons inducing SOCS3 with a consequent reduction on release of orexigenic peptides. In addition to its known satiety inducing effect, has a modulatory role in nutrient absorption. In the intestine, reduces glucose absorption by enterocytes by activating PKC and leading to a sequential activation of p38, PI3K and ERK signaling pathways which exerts an inhibitory effect on glucose absorption. Acts as a growth factor on certain tissues, through the activation of different signaling pathways increases expression of genes involved in cell cycle regulation such as CCND1, via JAK2-STAT3 pathway, or VEGFA, via MAPK1/3 and PI3K-AKT1 pathways. May also play an apoptotic role via JAK2-STAT3 pathway and up-regulation of BIRC5 expression. Pro-angiogenic, has mitogenic activity on vascular endothelial cells and plays a role in matrix remodeling by regulating the expression of matrix metalloproteinases (MMPs) and tissue inhibitors of metalloproteinases (TIMPs). In innate immunity, modulates the activity and function of neutrophils by increasing chemotaxis and the secretion of oxygen radicals. Increases phagocytosis by macrophages and enhances secretion of pro-inflammatory mediators. Increases cytotoxic ability of NK cells. Plays a pro-inflammatory role, in synergy with IL1B, by inducing NOS2 which promotes the production of IL6, IL8 and Prostaglandin E2, through a signaling pathway that involves JAK2, PI3K, MAP2K1/MEK1 and MAPK14/p38. In adaptive immunity, promotes the switch of memory T-cells towards T helper-1 cell immune responses. Increases CD4(+)CD25(-) T-cell proliferation and reduces autophagy during TCR (T-cell receptor) stimulation, through MTOR signaling pathway activation and BCL2 up-regulation. The sequence is that of Leptin (LEP) from Ovis aries (Sheep).